The primary structure comprises 239 residues: Skn-1 dependent zygotic transcript 1 protein (239 aa).

As to expression, expressed in mesendodermal precursor cells of embryos.

May have a role in mesendoderm development during embryogenesis. The protein is Skn-1 dependent zygotic transcript 1 protein (sdz-1) of Caenorhabditis elegans.